The sequence spans 251 residues: MAGHSRWHNIKNKKAKADAIKGRMFTKVIKEITIAARLGGGDPEANPRLRIAIEKAKEVNMPMENVERAIKRGTGELEGVNYEEVQYEGYGPGGVAIVVEATTDNRNRTTAEIRHIFSKYGGNLGSSGCVSFSFEDKGIINVPKDKYSEDEIFEKAIEAGAEDVIMDDPEYYEIRTAPSELYKVRENLEKMGVEIAKAELTKIPTTTVQITDEETATKLMKLLDALEDNDDVQKVYANFDIPESILEKLEG.

This sequence belongs to the TACO1 family.

Its subcellular location is the cytoplasm. The sequence is that of Probable transcriptional regulatory protein SYO3AOP1_0685 from Sulfurihydrogenibium sp. (strain YO3AOP1).